The following is a 187-amino-acid chain: UPF0301 protein YqgE (187 aa).

Belongs to the UPF0301 (AlgH) family.

The chain is UPF0301 protein YqgE from Escherichia coli O139:H28 (strain E24377A / ETEC).